The following is a 181-amino-acid chain: CAPA peptides (181 aa).

Residues 1-22 (MQDNRFFILMILLVFSTSLNQG) form the signal peptide. A propeptide spanning residues 23 to 29 (QKLKAND) is cleaved from the precursor. Isoleucine 41 carries the isoleucine amide modification. The propeptide occupies 44-54 (NSEISSFSRSE). Residue isoleucine 65 is modified to Isoleucine amide. A propeptide spanning residues 68 to 181 (SDVSSFDNLN…ENERDTANFL (114 aa)) is cleaved from the precursor. A disordered region spans residues 159–181 (TQGQGGYTPRLGRENERDTANFL). Positions 169–181 (LGRENERDTANFL) are enriched in basic and acidic residues.

A pyrokinin potentially constituted by residues Asn-158 to Gly-170 has so far not been detected and might be completely absent in ants. Periviscerokinin 1 and 2 are expressed in central brain, antennal lobes and gnathal, thoracic and abominal ganglia. Periviscerokinin 2 is also expressed in the retrocerebral complex (at protein level).

It localises to the secreted. Functionally, periviscerokinins mediate visceral muscle contractile activity (myotropic activity). This Camponotus floridanus (Florida carpenter ant) protein is CAPA peptides.